Reading from the N-terminus, the 423-residue chain is Gamma-glutamyl phosphate reductase (423 aa).

The protein belongs to the gamma-glutamyl phosphate reductase family.

It localises to the cytoplasm. The enzyme catalyses L-glutamate 5-semialdehyde + phosphate + NADP(+) = L-glutamyl 5-phosphate + NADPH + H(+). It functions in the pathway amino-acid biosynthesis; L-proline biosynthesis; L-glutamate 5-semialdehyde from L-glutamate: step 2/2. Its function is as follows. Catalyzes the NADPH-dependent reduction of L-glutamate 5-phosphate into L-glutamate 5-semialdehyde and phosphate. The product spontaneously undergoes cyclization to form 1-pyrroline-5-carboxylate. The chain is Gamma-glutamyl phosphate reductase from Pseudomonas putida (strain ATCC 700007 / DSM 6899 / JCM 31910 / BCRC 17059 / LMG 24140 / F1).